Consider the following 364-residue polypeptide: MMEKNKRVLLGMSGGTDSSVAAMLLLEAGYEVTGVTFRFYEFNGSTEYLEDARALAARLGIGHITYDARKVFQEQIIDYFIDEYMSGHTPVPCTLCNNQLKWPLLAKIADEMGIFYLATGHYVRKQWIDGNYYIAPAEDVDKDQSFFLWGLRQEILQRMLLPMGGMTKSEARAYAAGRGFEKVSKKKDSIGVCFCPLDYRSFLKKCLCDESGDKNRNIYRKVERGRFLDESGNFIAWHEGYPFYTIGQRRGLGIQLNRAVFVKEIHPETNEVVLASLKSLEKSEMWLKDWNIVDESRLLGCDDVIVKIRYRKQENHCSVTITPEGLLHIRLHEPLSAIAEGQAAAFYKDGLLLGGGIITMTDQR.

ATP-binding positions include 11–18 (GMSGGTDS) and F37. C96 functions as the Nucleophile in the catalytic mechanism. A disulfide bond links C96 and C193. G120 contacts ATP. An interaction with tRNA region spans residues 142 to 144 (KDQ). The Cysteine persulfide intermediate role is filled by C193. The segment at 309 to 310 (RY) is interaction with tRNA.

It belongs to the MnmA/TRMU family.

The protein localises to the cytoplasm. The catalysed reaction is S-sulfanyl-L-cysteinyl-[protein] + uridine(34) in tRNA + AH2 + ATP = 2-thiouridine(34) in tRNA + L-cysteinyl-[protein] + A + AMP + diphosphate + H(+). Catalyzes the 2-thiolation of uridine at the wobble position (U34) of tRNA, leading to the formation of s(2)U34. The chain is tRNA-specific 2-thiouridylase MnmA 1 from Bacteroides fragilis (strain ATCC 25285 / DSM 2151 / CCUG 4856 / JCM 11019 / LMG 10263 / NCTC 9343 / Onslow / VPI 2553 / EN-2).